The chain runs to 403 residues: S-adenosylmethionine synthase (403 aa).

Residue H17 participates in ATP binding. D19 is a binding site for Mg(2+). K(+) is bound at residue E45. L-methionine is bound by residues E58 and Q104. A flexible loop region spans residues 104–114 (QSPDIAQGVDT). Residues 179–181 (DGK), 250–251 (KF), D259, 265–266 (RK), A282, and K286 contribute to the ATP site. D259 is an L-methionine binding site. K290 is an L-methionine binding site.

The protein belongs to the AdoMet synthase family. Homotetramer; dimer of dimers. Requires Mg(2+) as cofactor. The cofactor is K(+).

Its subcellular location is the cytoplasm. It carries out the reaction L-methionine + ATP + H2O = S-adenosyl-L-methionine + phosphate + diphosphate. Its pathway is amino-acid biosynthesis; S-adenosyl-L-methionine biosynthesis; S-adenosyl-L-methionine from L-methionine: step 1/1. Functionally, catalyzes the formation of S-adenosylmethionine (AdoMet) from methionine and ATP. The overall synthetic reaction is composed of two sequential steps, AdoMet formation and the subsequent tripolyphosphate hydrolysis which occurs prior to release of AdoMet from the enzyme. The protein is S-adenosylmethionine synthase of Mycobacterium bovis (strain BCG / Pasteur 1173P2).